A 262-amino-acid polypeptide reads, in one-letter code: Acyl-coenzyme A diphosphatase FITM2 (262 aa).

Over 1 to 23 (MEHLERCAWVLRGTLVRSAVRKY) the chain is Cytoplasmic. A helical membrane pass occupies residues 24–44 (LPWALAASMLAGSLLKELSPL). The Lumenal portion of the chain corresponds to 45 to 57 (PESYLSNKRNVLN). Residues 58-78 (VYFVKVAWAWTFCLLLPFIAL) form a helical membrane-spanning segment. The Cytoplasmic segment spans residues 79–93 (TNYHLTGKAGLVLRR). The helical transmembrane segment at 94-114 (LSTLLVGTAIWYVCTAIFSNI) threads the bilayer. Residues 115 to 145 (EHYTGSCYQSPALEGERKEHQSKQQCHGEGG) lie on the Lumenal side of the membrane. Residues 146 to 166 (FWHGFDISGHSFLLTFCALMI) traverse the membrane as a helical segment. H155 is a catalytic residue. The Cytoplasmic portion of the chain corresponds to 167–190 (VEEMAVLHEVKTDRNHCLHAAITT). The helical transmembrane segment at 191–211 (LVVALGFLTFIWVWMFLCTAV) threads the bilayer. Residues 212 to 218 (YFHNLSQ) are Lumenal-facing. H214 is a catalytic residue. The helical transmembrane segment at 219-239 (KVFGTLFGLLGWYGTYGCWYL) threads the bilayer. Residues 240-262 (KSFSPGLPPQSSSLNLKQDTYKK) are Cytoplasmic-facing.

Belongs to the FIT family. FIT2 subfamily.

It is found in the endoplasmic reticulum membrane. It carries out the reaction an acyl-CoA + H2O = an acyl-4'-phosphopantetheine + adenosine 3',5'-bisphosphate + 2 H(+). The catalysed reaction is (9Z)-octadecenoyl-CoA + H2O = S-(9Z-octadecenoyl)-4'-phosphopantetheine + adenosine 3',5'-bisphosphate + 2 H(+). The enzyme catalyses (5Z,8Z,11Z,14Z)-eicosatetraenoyl-CoA + H2O = S-(5Z,8Z,11Z,14Z-eicosatetraenoyl)-4'-phosphopantetheine + adenosine 3',5'-bisphosphate + 2 H(+). It catalyses the reaction hexadecanoyl-CoA + H2O = S-hexadecanoyl-4'-phosphopantetheine + adenosine 3',5'-bisphosphate + 2 H(+). Functionally, fatty acyl-coenzyme A (CoA) diphosphatase that hydrolyzes fatty acyl-CoA to yield acyl-4'-phosphopantetheine and adenosine 3',5'-bisphosphate. Preferentially hydrolyzes unsaturated long-chain acyl-CoA substrates such as oleoyl-CoA/(9Z)-octadecenoyl-CoA and arachidonoyl-CoA/(5Z,8Z,11Z,14Z)-eicosatetraenoyl-CoA in the endoplasmic reticulum (ER) lumen. This catalytic activity is required for maintaining ER structure and for lipid droplets (LDs) biogenesis, which are lipid storage organelles involved in maintaining lipid and energy homeostasis. Directly binds to diacylglycerol (DAGs) and triacylglycerol, which is also important for LD biogenesis. May support directional budding of nacent LDs from the ER into the cytosol by reducing DAG levels at sites of LD formation. Plays a role in the regulation of cell morphology and cytoskeletal organization. The polypeptide is Acyl-coenzyme A diphosphatase FITM2 (Bos taurus (Bovine)).